The following is an 859-amino-acid chain: Outer membrane usher protein AfaC (859 aa).

An N-terminal signal peptide occupies residues M1–R28.

It belongs to the fimbrial export usher family.

The protein resides in the cell outer membrane. Its function is as follows. Involved in the export and assembly of AFA-III afimbrial adhesin subunits across the outer membrane. This chain is Outer membrane usher protein AfaC (afaC), found in Escherichia coli.